The chain runs to 203 residues: Outer-membrane lipoprotein LolB (203 aa).

Residues 1 to 16 (MKTFLPCLFFLLILVG) form the signal peptide. Residue Cys17 is the site of N-palmitoyl cysteine attachment. The S-diacylglycerol cysteine moiety is linked to residue Cys17.

The protein belongs to the LolB family. Monomer.

It is found in the cell outer membrane. Plays a critical role in the incorporation of lipoproteins in the outer membrane after they are released by the LolA protein. The chain is Outer-membrane lipoprotein LolB from Psychromonas ingrahamii (strain DSM 17664 / CCUG 51855 / 37).